The primary structure comprises 494 residues: Alpha-amylase B (494 aa).

Positions 1–18 (MFLAKSIVCLALLAVANA) are cleaved as a signal peptide. Gln19 bears the Pyrrolidone carboxylic acid mark. The cysteines at positions 46 and 102 are disulfide-linked. Positions 116, 165, and 174 each coordinate Ca(2+). Cys153 and Cys167 form a disulfide bridge. Residue Arg202 coordinates chloride. The Nucleophile role is filled by Asp204. Residue His208 participates in Ca(2+) binding. Catalysis depends on Glu241, which acts as the Proton donor. Residues Asn304 and Arg343 each coordinate chloride. 2 disulfides stabilise this stretch: Cys376–Cys382 and Cys448–Cys460.

The protein belongs to the glycosyl hydrolase 13 family. In terms of assembly, monomer. Requires Ca(2+) as cofactor. Chloride is required as a cofactor.

The catalysed reaction is Endohydrolysis of (1-&gt;4)-alpha-D-glucosidic linkages in polysaccharides containing three or more (1-&gt;4)-alpha-linked D-glucose units.. This is Alpha-amylase B (Amy-d) from Drosophila melanogaster (Fruit fly).